A 201-amino-acid polypeptide reads, in one-letter code: Large ribosomal subunit protein bL25 (201 aa).

This sequence belongs to the bacterial ribosomal protein bL25 family. CTC subfamily. As to quaternary structure, part of the 50S ribosomal subunit; part of the 5S rRNA/L5/L18/L25 subcomplex. Contacts the 5S rRNA. Binds to the 5S rRNA independently of L5 and L18.

Functionally, this is one of the proteins that binds to the 5S RNA in the ribosome where it forms part of the central protuberance. The chain is Large ribosomal subunit protein bL25 from Burkholderia lata (strain ATCC 17760 / DSM 23089 / LMG 22485 / NCIMB 9086 / R18194 / 383).